Reading from the N-terminus, the 1820-residue chain is Cation channel sperm-associated targeting subunit tau (1820 aa).

Residues 87 to 222 (DSEELEITQE…QKGCFIEEVQ (136 aa)) enclose the C2 domain. Disordered stretches follow at residues 360-383 (SEETNIDEASENTKSNHPEEELEN), 403-443 (LLDN…TEVH), 695-722 (EVSMNSEAREKSSSPLLSIHDKSSSSME), and 838-857 (SSTKKKHLISEVPNSKSGSS). Residues 415 to 443 (PTLNQSDQDNSTADASKNDESTPSPTEVH) show a composition bias toward polar residues.

Component of the CatSper complex or CatSpermasome composed of the core pore-forming members CATSPER1, CATSPER2, CATSPER3 and CATSPER4 as well as auxiliary members CATSPERB, CATSPERG, CATSPERD, CATSPERE, CATSPERZ, C2CD6/CATSPERT, TMEM249, TMEM262 and EFCAB9. HSPA1 may be an additional auxiliary complex member. The core complex members CATSPER1, CATSPER2, CATSPER3 and CATSPER4 form a heterotetrameric channel. The auxiliary CATSPERB, CATSPERG, CATSPERD and CATSPERE subunits form a pavilion-like structure over the pore which stabilizes the complex through interactions with CATSPER4, CATSPER3, CATSPER1 and CATSPER2 respectively. SLCO6C1 interacts with CATSPERE and TMEM262/CATSPERH interacts with CATSPERB, further stabilizing the complex. C2CD6/CATSPERT interacts at least with CATSPERD and is required for targeting the CatSper complex in the flagellar membrane. In terms of tissue distribution, expressed in testis (at protein level).

Its subcellular location is the cell projection. The protein localises to the cilium. It localises to the flagellum membrane. Functionally, auxiliary component of the CatSper complex, a complex involved in sperm cell hyperactivation. Sperm cell hyperactivation is needed for sperm motility which is essential late in the preparation of sperm for fertilization. Required for CatSper complex targeting and trafficking into the quadrilinear nanodomains. Targets the preassembled CatSper complexes to elongating flagella, where it links the channel-carrying vesicles and motor proteins. This is Cation channel sperm-associated targeting subunit tau from Homo sapiens (Human).